The sequence spans 63 residues: Large ribosomal subunit protein bL28 (63 aa).

Belongs to the bacterial ribosomal protein bL28 family.

The sequence is that of Large ribosomal subunit protein bL28 from Geotalea uraniireducens (strain Rf4) (Geobacter uraniireducens).